The chain runs to 1165 residues: Chitin synthase 3 (1165 aa).

Topologically, residues Met1–Gln170 are cytoplasmic. Disordered regions lie at residues Asp19 to Asp53 and Pro74 to Arg97. A compositionally biased stretch (polar residues) spans Pro74–Ser92. Lys136 is covalently cross-linked (Glycyl lysine isopeptide (Lys-Gly) (interchain with G-Cter in ubiquitin)). The helical transmembrane segment at Met171–Pro191 threads the bilayer. At Lys192–Gly340 the chain is on the extracellular side. Asn303 and Asn332 each carry an N-linked (GlcNAc...) asparagine glycan. The chain crosses the membrane as a helical span at residues Trp341 to Tyr354. The Cytoplasmic segment spans residues Gly355–Asp452. The helical transmembrane segment at Val453–Ala473 threads the bilayer. Residues Cys474–Lys891 lie on the Extracellular side of the membrane. Position 537 is a phosphoserine (Ser537). Thr538 bears the Phosphothreonine mark. A helical transmembrane segment spans residues Ala892–Tyr910. Residues Arg911–Leu1029 are Cytoplasmic-facing. A helical membrane pass occupies residues Ile1030–Ile1050. The Extracellular portion of the chain corresponds to Val1051–Thr1055. Residues Pro1056–Ile1076 traverse the membrane as a helical segment. The Cytoplasmic portion of the chain corresponds to Thr1077 to Ala1165.

Belongs to the chitin synthase family. Class IV subfamily. In terms of assembly, homodimer. May form higher order oligomers. Seems to interact with BNI4 and SKT5 which link CHS3 to septins. Post-translationally, glycosylated. Palmitoylated by PFA4; required for proper export from the ER.

The protein localises to the cell membrane. Its subcellular location is the bud neck. It is found in the cytoplasmic vesicle membrane. It catalyses the reaction [(1-&gt;4)-N-acetyl-beta-D-glucosaminyl](n) + UDP-N-acetyl-alpha-D-glucosamine = [(1-&gt;4)-N-acetyl-beta-D-glucosaminyl](n+1) + UDP + H(+). In terms of biological role, polymerizes chitin, a structural polymer of the cell wall and septum, by transferring the sugar moiety of UDP-GlcNAc to the non-reducing end of the growing chitin polymer. Appears to be responsible for synthesis of the majority of the chitin found in the cell wall periphery. It is involved in the synthesis of the chitin ring that forms in the cell wall just before bud emergence. This ring remains at the base of the bud as the bud grows and ultimately forms part of the bud scar marking the division site on the mother cell. Also catalyzes the synthesis of chitin laid down during mating and spore cell-wall synthesis. This chain is Chitin synthase 3, found in Saccharomyces cerevisiae (strain ATCC 204508 / S288c) (Baker's yeast).